Consider the following 162-residue polypeptide: D-aminoacyl-tRNA deacylase (162 aa).

The short motif at 145-146 (GP) is the Gly-cisPro motif, important for rejection of L-amino acids element.

It belongs to the DTD family. As to quaternary structure, homodimer.

It is found in the cytoplasm. It catalyses the reaction glycyl-tRNA(Ala) + H2O = tRNA(Ala) + glycine + H(+). The catalysed reaction is a D-aminoacyl-tRNA + H2O = a tRNA + a D-alpha-amino acid + H(+). An aminoacyl-tRNA editing enzyme that deacylates mischarged D-aminoacyl-tRNAs. Also deacylates mischarged glycyl-tRNA(Ala), protecting cells against glycine mischarging by AlaRS. Acts via tRNA-based rather than protein-based catalysis; rejects L-amino acids rather than detecting D-amino acids in the active site. By recycling D-aminoacyl-tRNA to D-amino acids and free tRNA molecules, this enzyme counteracts the toxicity associated with the formation of D-aminoacyl-tRNA entities in vivo and helps enforce protein L-homochirality. The sequence is that of D-aminoacyl-tRNA deacylase from Bifidobacterium longum subsp. infantis (strain ATCC 15697 / DSM 20088 / JCM 1222 / NCTC 11817 / S12).